A 356-amino-acid polypeptide reads, in one-letter code: Phospho-N-acetylmuramoyl-pentapeptide-transferase (356 aa).

The next 10 membrane-spanning stretches (helical) occupy residues 25-45 (TVAAMLTSGLIVFLFGPSIIA), 70-90 (GTPTMGGLMILTGIVVSAFLW), 93-113 (LSNIYFWVSLFVMLSFGMIGF), 138-158 (FLIAIIAAFVLLQVGSSGLAL), 164-184 (YFINLSWFFLPFSAFVIVGTG), 195-215 (GLAIVPVMVAALSFALIAYLS), 235-255 (LAVLLGAVVGAGLGFLWFNAP), 258-278 (AIFMGDTGSLALGGLLGIVAV), 284-304 (IVLALIGGLFVLEGFSVVIQV), and 333-353 (QVVIRFWIISIVLALVGLSTL).

This sequence belongs to the glycosyltransferase 4 family. MraY subfamily. Mg(2+) is required as a cofactor.

The protein localises to the cell inner membrane. It carries out the reaction UDP-N-acetyl-alpha-D-muramoyl-L-alanyl-gamma-D-glutamyl-meso-2,6-diaminopimeloyl-D-alanyl-D-alanine + di-trans,octa-cis-undecaprenyl phosphate = di-trans,octa-cis-undecaprenyl diphospho-N-acetyl-alpha-D-muramoyl-L-alanyl-D-glutamyl-meso-2,6-diaminopimeloyl-D-alanyl-D-alanine + UMP. Its pathway is cell wall biogenesis; peptidoglycan biosynthesis. Functionally, catalyzes the initial step of the lipid cycle reactions in the biosynthesis of the cell wall peptidoglycan: transfers peptidoglycan precursor phospho-MurNAc-pentapeptide from UDP-MurNAc-pentapeptide onto the lipid carrier undecaprenyl phosphate, yielding undecaprenyl-pyrophosphoryl-MurNAc-pentapeptide, known as lipid I. The protein is Phospho-N-acetylmuramoyl-pentapeptide-transferase of Bartonella quintana (strain Toulouse) (Rochalimaea quintana).